Reading from the N-terminus, the 515-residue chain is Histidine ammonia-lyase (515 aa).

The segment at residues 142 to 144 is a cross-link (5-imidazolinone (Ala-Gly)); sequence ASG. Serine 143 is modified (2,3-didehydroalanine (Ser)).

Belongs to the PAL/histidase family. Contains an active site 4-methylidene-imidazol-5-one (MIO), which is formed autocatalytically by cyclization and dehydration of residues Ala-Ser-Gly.

Its subcellular location is the cytoplasm. It carries out the reaction L-histidine = trans-urocanate + NH4(+). The protein operates within amino-acid degradation; L-histidine degradation into L-glutamate; N-formimidoyl-L-glutamate from L-histidine: step 1/3. The chain is Histidine ammonia-lyase from Bradyrhizobium sp. (strain BTAi1 / ATCC BAA-1182).